The primary structure comprises 793 residues: Nuclear cap-binding protein subunit 1 (793 aa).

The MIF4G domain occupies 28–242 (EKKLQEVIGK…SLSAQIENLR (215 aa)).

This sequence belongs to the NCBP1 family. Component of the nuclear cap-binding complex (CBC), a heterodimer composed of ncbp-1 and ncbp-1 that interacts with m7GpppG-capped RNA.

Its subcellular location is the nucleus. In terms of biological role, component of the cap-binding complex (CBC), which binds cotranscriptionally to the 5'-cap of pre-mRNAs and is involved in various processes such as pre-mRNA splicing and RNA-mediated gene silencing (RNAi). The CBC complex is involved in miRNA-mediated RNA interference and is required for primary microRNAs (miRNAs) processing. In the CBC complex, ncbp-1 does not bind directly capped RNAs (m7GpppG-capped RNA) but is required to stabilize the movement of the N-terminal loop of ncbp-2 and lock the CBC into a high affinity cap-binding state with the cap structure. This is Nuclear cap-binding protein subunit 1 (ncbp-1) from Caenorhabditis briggsae.